The chain runs to 176 residues: Adenine phosphoribosyltransferase (176 aa).

This sequence belongs to the purine/pyrimidine phosphoribosyltransferase family. As to quaternary structure, homodimer.

It is found in the cytoplasm. It carries out the reaction AMP + diphosphate = 5-phospho-alpha-D-ribose 1-diphosphate + adenine. The protein operates within purine metabolism; AMP biosynthesis via salvage pathway; AMP from adenine: step 1/1. Its function is as follows. Catalyzes a salvage reaction resulting in the formation of AMP, that is energically less costly than de novo synthesis. This is Adenine phosphoribosyltransferase from Borreliella burgdorferi (strain ATCC 35210 / DSM 4680 / CIP 102532 / B31) (Borrelia burgdorferi).